A 909-amino-acid polypeptide reads, in one-letter code: Probable dipeptidyl-aminopeptidase B (909 aa).

Residues Met-1–Asn-63 are disordered. Topologically, residues Met-1–Leu-94 are cytoplasmic. Over residues Asp-27 to Leu-38 the composition is skewed to low complexity. Residues Ile-95–Phe-115 traverse the membrane as a helical; Signal-anchor for type II membrane protein segment. Residues Val-116–Phe-909 are Vacuolar-facing. N-linked (GlcNAc...) asparagine glycosylation occurs at Asn-121. Residues Thr-123 to Pro-134 show a composition bias toward polar residues. The tract at residues Thr-123 to Pro-144 is disordered. N-linked (GlcNAc...) asparagine glycosylation is found at Asn-207, Asn-303, and Asn-355. Residue Ser-760 is the Charge relay system of the active site. Residues Asn-814, Asn-819, and Asn-822 are each glycosylated (N-linked (GlcNAc...) asparagine). Active-site charge relay system residues include Asp-837 and His-870. Asn-888 is a glycosylation site (N-linked (GlcNAc...) asparagine).

It belongs to the peptidase S9B family.

The protein resides in the vacuole membrane. The enzyme catalyses Release of an N-terminal dipeptide, Xaa-Yaa-|-Zaa-, from a polypeptide, preferentially when Yaa is Pro, provided Zaa is neither Pro nor hydroxyproline.. In terms of biological role, type IV dipeptidyl-peptidase which removes N-terminal dipeptides sequentially from polypeptides having unsubstituted N-termini provided that the penultimate residue is proline. This chain is Probable dipeptidyl-aminopeptidase B (DAPB), found in Arthroderma benhamiae (strain ATCC MYA-4681 / CBS 112371) (Trichophyton mentagrophytes).